We begin with the raw amino-acid sequence, 607 residues long: Glutamine--fructose-6-phosphate aminotransferase [isomerizing] (607 aa).

Cys-2 (nucleophile; for GATase activity) is an active-site residue. The Glutamine amidotransferase type-2 domain maps to 2-217; the sequence is CGIIGILGKR…DGDWAVLTRE (216 aa). 2 consecutive SIS domains span residues 277–422 and 455–597; these read TVRS…QRGF and ICRN…VDQP. Lys-602 acts as the For Fru-6P isomerization activity in catalysis.

In terms of assembly, homodimer.

Its subcellular location is the cytoplasm. The enzyme catalyses D-fructose 6-phosphate + L-glutamine = D-glucosamine 6-phosphate + L-glutamate. Catalyzes the first step in hexosamine metabolism, converting fructose-6P into glucosamine-6P using glutamine as a nitrogen source. The chain is Glutamine--fructose-6-phosphate aminotransferase [isomerizing] from Bartonella henselae (strain ATCC 49882 / DSM 28221 / CCUG 30454 / Houston 1) (Rochalimaea henselae).